We begin with the raw amino-acid sequence, 1394 residues long: DNA-directed RNA polymerase subunit beta'' (1394 aa).

4 residues coordinate Zn(2+): C224, C295, C302, and C305.

The protein belongs to the RNA polymerase beta' chain family. RpoC2 subfamily. In plastids the minimal PEP RNA polymerase catalytic core is composed of four subunits: alpha, beta, beta', and beta''. When a (nuclear-encoded) sigma factor is associated with the core the holoenzyme is formed, which can initiate transcription. It depends on Zn(2+) as a cofactor.

Its subcellular location is the plastid. It localises to the chloroplast. It carries out the reaction RNA(n) + a ribonucleoside 5'-triphosphate = RNA(n+1) + diphosphate. Its function is as follows. DNA-dependent RNA polymerase catalyzes the transcription of DNA into RNA using the four ribonucleoside triphosphates as substrates. The chain is DNA-directed RNA polymerase subunit beta'' from Vitis vinifera (Grape).